Here is a 59-residue protein sequence, read N- to C-terminus: MGVAQHRQSKSRVRKRRAMWKLTAPNHIECPQCHKPKMPHHVCPSCGYYKAKEVISMGE.

This sequence belongs to the bacterial ribosomal protein bL32 family.

The chain is Large ribosomal subunit protein bL32 from Desulfitobacterium hafniense (strain Y51).